The chain runs to 240 residues: Ribonuclease P protein component (240 aa).

The tract at residues 1–140 (MDEKDLATQQ…KKAGGKGLVS (140 aa)) is disordered. Residues 40–51 (APPPHRVIPPHP) are compositionally biased toward pro residues. The insert stretch occupies residues 47-123 (IPPHPGLRQD…PGPDRDGGSK (77 aa)). Residues 122 to 132 (SKASRASSPKK) show a composition bias toward low complexity.

The protein belongs to the RnpA family. As to quaternary structure, consists of a catalytic RNA component (M1 or rnpB) and a protein subunit.

The enzyme catalyses Endonucleolytic cleavage of RNA, removing 5'-extranucleotides from tRNA precursor.. Functionally, RNaseP catalyzes the removal of the 5'-leader sequence from pre-tRNA to produce the mature 5'-terminus. It can also cleave other RNA substrates such as 4.5S RNA. The protein component plays an auxiliary but essential role in vivo by binding to the 5'-leader sequence and broadening the substrate specificity of the ribozyme. The chain is Ribonuclease P protein component from Thermus filiformis.